The chain runs to 217 residues: Protein-L-isoaspartate O-methyltransferase (217 aa).

S65 is an active-site residue.

The protein belongs to the methyltransferase superfamily. L-isoaspartyl/D-aspartyl protein methyltransferase family.

It is found in the cytoplasm. It carries out the reaction [protein]-L-isoaspartate + S-adenosyl-L-methionine = [protein]-L-isoaspartate alpha-methyl ester + S-adenosyl-L-homocysteine. Catalyzes the methyl esterification of L-isoaspartyl residues in peptides and proteins that result from spontaneous decomposition of normal L-aspartyl and L-asparaginyl residues. It plays a role in the repair and/or degradation of damaged proteins. The sequence is that of Protein-L-isoaspartate O-methyltransferase from Chlorobium limicola (strain DSM 245 / NBRC 103803 / 6330).